A 237-amino-acid chain; its full sequence is Flagellar brake protein YcgR (237 aa).

The PilZ domain occupies 108–225 (QRRRQFRVTT…MERKIQSAVF (118 aa)).

The protein belongs to the YcgR family. As to quaternary structure, monomer. Interacts with the flagellar basal bodies.

The protein resides in the bacterial flagellum basal body. Acts as a flagellar brake, regulating swimming and swarming in a bis-(3'-5') cyclic diguanylic acid (c-di-GMP)-dependent manner. Binds 1 c-di-GMP dimer per subunit. Increasing levels of c-di-GMP lead to decreased motility. In Serratia proteamaculans (strain 568), this protein is Flagellar brake protein YcgR.